The chain runs to 379 residues: Origin of replication complex subunit 2 (379 aa).

The segment at 1 to 25 is disordered; that stretch reads MALRGGHAAAAAGVSSGSEDDDEEA. The span at 8-17 shows a compositional bias: low complexity; the sequence is AAAAAGVSSG.

Belongs to the ORC2 family. Component of the origin recognition complex (ORC) composed of at least ORC1, ORC2, ORC3, ORC4, ORC5 and ORC6. ORC is regulated in a cell-cycle and development dependent manner. It is sequentially assembled at the exit from anaphase of mitosis and disassembled as cells enter S phase.

The protein resides in the nucleus. Essential protein. Component of the origin recognition complex (ORC) that binds origins of replication. DNA-binding is ATP-dependent, however specific DNA sequences that define origins of replication have not been identified so far. ORC is required to assemble the pre-replication complex necessary to initiate DNA replication. This Oryza sativa subsp. indica (Rice) protein is Origin of replication complex subunit 2.